A 622-amino-acid chain; its full sequence is Interleukin-1 receptor-associated kinase-like 2 (622 aa).

Residues 13-94 (LDDLCRNIDT…RAAQIVLSWK (82 aa)) enclose the Death domain. Positions 208–473 (FDQSHRISEG…LPEACEEAWA (266 aa)) constitute a Protein kinase domain. ATP is bound by residues 214-222 (ISEGTFADI), Lys-235, and 335-338 (KSAN). Disordered regions lie at residues 511–532 (RVSE…VDNS) and 553–591 (LFTG…ETSW). Polar residues-rich tracts occupy residues 513 to 523 (SEATGSSSNTP) and 561 to 590 (QPST…TETS).

This sequence belongs to the protein kinase superfamily. TKL Ser/Thr protein kinase family. Pelle subfamily. In terms of assembly, interacts with MYD88. IL-1 stimulation leads to the formation of a signaling complex which dissociates from the IL-1 receptor following the binding of PELI1. As to expression, ubiquitously expressed, with a higher expression observed in brain, spleen and liver. Isoform 1 and isoform 2 are considered agonist and isoform 3 and isoform 4 are considered antagonist.

Functionally, binds to the IL-1 type I receptor following IL-1 engagement, triggering intracellular signaling cascades leading to transcriptional up-regulation and mRNA stabilization. The sequence is that of Interleukin-1 receptor-associated kinase-like 2 (Irak2) from Mus musculus (Mouse).